The following is a 273-amino-acid chain: Ribosomal RNA small subunit methyltransferase A (273 aa).

S-adenosyl-L-methionine contacts are provided by Asn18, Leu20, Gly45, Glu66, Asp91, and Asn113.

It belongs to the class I-like SAM-binding methyltransferase superfamily. rRNA adenine N(6)-methyltransferase family. RsmA subfamily.

It localises to the cytoplasm. It carries out the reaction adenosine(1518)/adenosine(1519) in 16S rRNA + 4 S-adenosyl-L-methionine = N(6)-dimethyladenosine(1518)/N(6)-dimethyladenosine(1519) in 16S rRNA + 4 S-adenosyl-L-homocysteine + 4 H(+). Its function is as follows. Specifically dimethylates two adjacent adenosines (A1518 and A1519) in the loop of a conserved hairpin near the 3'-end of 16S rRNA in the 30S particle. May play a critical role in biogenesis of 30S subunits. The sequence is that of Ribosomal RNA small subunit methyltransferase A from Shigella boydii serotype 18 (strain CDC 3083-94 / BS512).